The chain runs to 670 residues: Solute carrier organic anion transporter family member 1A6 (670 aa).

Residues 1 to 20 (MGEPGKRVGIHRVRCFAKIK) are Cytoplasmic-facing. The chain crosses the membrane as a helical span at residues 21 to 40 (VFLLALIWAYISKILSGVYM). Residues 41–59 (STMLTQLERQFNISTSIVG) are Extracellular-facing. Asn-52 is a glycosylation site (N-linked (GlcNAc...) asparagine). The helical transmembrane segment at 60–80 (LINGSFEMGNLLVIVFVSYFG) threads the bilayer. At 81 to 86 (TKLHRP) the chain is on the cytoplasmic side. Residues 87 to 111 (IMIGVGCAVMGLGCFIISLPHFLMG) form a helical membrane-spanning segment. Over 112–155 (RYEYETTISPTSNLSSNSFLCVENRSQTLKPTQDPAECVKEIKS) the chain is Extracellular. N-linked (GlcNAc...) asparagine glycans are attached at residues Asn-124 and Asn-135. The chain crosses the membrane as a helical span at residues 156-184 (LMWIYVLVGNIIRGIGETPIMPLGISYIE). The Cytoplasmic portion of the chain corresponds to 185-203 (DFAKSENSPLYIGILEVGK). Residues 204–224 (MIGPILGYLMGPFCANIYVDT) form a helical membrane-spanning segment. Topologically, residues 225–242 (GSVNTDDLTITPTDTRWV) are extracellular. A helical membrane pass occupies residues 243–267 (GAWWIGFLVCAGVNVLTSIPFFFFP). Over 268 to 311 (KTLPKEGLQDNGDGTENAKEEKHRDKAKEENQGIIKEFFLMMKN) the chain is Cytoplasmic. The helical transmembrane segment at 312–333 (LFCNPIYMLCVLTSVLQVNGVA) threads the bilayer. The Extracellular portion of the chain corresponds to 334–353 (NIVIYKPKYLEHHFGISTAK). A helical membrane pass occupies residues 354–377 (AVFLIGLYTTPSVSAGYLISGFIM). Over 378–381 (KKLK) the chain is Cytoplasmic. The chain crosses the membrane as a helical span at residues 382–405 (ITLKKAAIIALCLFMSECLLSLCN). Residues 406-513 (FMLTCDTTPI…PDCANKLQYF (108 aa)) are Extracellular-facing. One can recognise a Kazal-like domain in the interval 433-488 (NKFLSDCNTRCNCLTKTWDPVCGNNGLAYMSPCLAGCEKSVGTGANMVFQNCSCIR). Intrachain disulfides connect Cys-439–Cys-469, Cys-445–Cys-465, and Cys-454–Cys-486. 2 N-linked (GlcNAc...) asparagine glycosylation sites follow: Asn-483 and Asn-492. A helical membrane pass occupies residues 514 to 536 (LIITVFCCFFYSLATIPGYMVFL). At 537–545 (RCMKSEEKS) the chain is on the cytoplasmic side. A helical membrane pass occupies residues 546–571 (LGIGLQAFFMRLFAGIPAPIYFGALI). Residues 572 to 605 (DRTCLHWGTLKCGEPGACRTYEVSSFRRLYLGLP) are Extracellular-facing. The helical transmembrane segment at 606–623 (AALRGSIILPSFFILRLI) threads the bilayer. The Cytoplasmic portion of the chain corresponds to 624-670 (RKLQIPGDTDSSEIELAETKPTEKESECTDMHKSSKVENDGELKTKL). Thr-632 carries the phosphothreonine modification. The interval 633–670 (DSSEIELAETKPTEKESECTDMHKSSKVENDGELKTKL) is disordered. 2 positions are modified to phosphoserine: Ser-634 and Ser-635. Residues 640–670 (AETKPTEKESECTDMHKSSKVENDGELKTKL) show a composition bias toward basic and acidic residues.

It belongs to the organo anion transporter (TC 2.A.60) family. Kidney specific.

The protein resides in the cell membrane. Functionally, may mediate the Na(+)-independent transport of organic anions. The protein is Solute carrier organic anion transporter family member 1A6 (Slco1a6) of Mus musculus (Mouse).